Consider the following 232-residue polypeptide: 5'-methylthioadenosine/S-adenosylhomocysteine nucleosidase (232 aa).

The active-site Proton acceptor is the Glu12. Substrate is bound by residues Gly78, Ile152, and 173–174 (ME). Residue Asp197 is the Proton donor of the active site.

Belongs to the PNP/UDP phosphorylase family. MtnN subfamily. Homodimer.

It catalyses the reaction S-adenosyl-L-homocysteine + H2O = S-(5-deoxy-D-ribos-5-yl)-L-homocysteine + adenine. The catalysed reaction is S-methyl-5'-thioadenosine + H2O = 5-(methylsulfanyl)-D-ribose + adenine. The enzyme catalyses 5'-deoxyadenosine + H2O = 5-deoxy-D-ribose + adenine. The protein operates within amino-acid biosynthesis; L-methionine biosynthesis via salvage pathway; S-methyl-5-thio-alpha-D-ribose 1-phosphate from S-methyl-5'-thioadenosine (hydrolase route): step 1/2. Catalyzes the irreversible cleavage of the glycosidic bond in both 5'-methylthioadenosine (MTA) and S-adenosylhomocysteine (SAH/AdoHcy) to adenine and the corresponding thioribose, 5'-methylthioribose and S-ribosylhomocysteine, respectively. Also cleaves 5'-deoxyadenosine, a toxic by-product of radical S-adenosylmethionine (SAM) enzymes, into 5-deoxyribose and adenine. Thus, is required for in vivo function of the radical SAM enzymes biotin synthase and lipoic acid synthase, that are inhibited by 5'-deoxyadenosine accumulation. The protein is 5'-methylthioadenosine/S-adenosylhomocysteine nucleosidase of Salmonella choleraesuis (strain SC-B67).